Consider the following 438-residue polypeptide: Trigger factor (438 aa).

The 72-residue stretch at 160–231 folds into the PPIase FKBP-type domain; it reads SDQVTIEEQG…IMDVKTKQLQ (72 aa). The disordered stretch occupies residues 407–438; it reads AQLSGPQAETVAADQGEQQAEGQEESAEKSEE. Residues 418-427 show a composition bias toward low complexity; it reads AADQGEQQAE.

This sequence belongs to the FKBP-type PPIase family. Tig subfamily.

It is found in the cytoplasm. It carries out the reaction [protein]-peptidylproline (omega=180) = [protein]-peptidylproline (omega=0). Involved in protein export. Acts as a chaperone by maintaining the newly synthesized protein in an open conformation. Functions as a peptidyl-prolyl cis-trans isomerase. The polypeptide is Trigger factor (Deinococcus deserti (strain DSM 17065 / CIP 109153 / LMG 22923 / VCD115)).